The primary structure comprises 534 residues: Light-independent protochlorophyllide reductase subunit B (534 aa).

Aspartate 36 lines the [4Fe-4S] cluster pocket. Catalysis depends on aspartate 274, which acts as the Proton donor. 409–410 lines the substrate pocket; sequence GL. A disordered region spans residues 426–446; the sequence is DEAGPSHHGGKAVPASAPRAD.

Belongs to the ChlB/BchB/BchZ family. Protochlorophyllide reductase is composed of three subunits; BchL, BchN and BchB. Forms a heterotetramer of two BchB and two BchN subunits. It depends on [4Fe-4S] cluster as a cofactor.

It catalyses the reaction chlorophyllide a + oxidized 2[4Fe-4S]-[ferredoxin] + 2 ADP + 2 phosphate = protochlorophyllide a + reduced 2[4Fe-4S]-[ferredoxin] + 2 ATP + 2 H2O. Its pathway is porphyrin-containing compound metabolism; bacteriochlorophyll biosynthesis (light-independent). Functionally, component of the dark-operative protochlorophyllide reductase (DPOR) that uses Mg-ATP and reduced ferredoxin to reduce ring D of protochlorophyllide (Pchlide) to form chlorophyllide a (Chlide). This reaction is light-independent. The NB-protein (BchN-BchB) is the catalytic component of the complex. The polypeptide is Light-independent protochlorophyllide reductase subunit B (Cereibacter sphaeroides (strain ATCC 17029 / ATH 2.4.9) (Rhodobacter sphaeroides)).